We begin with the raw amino-acid sequence, 686 residues long: Acyl-CoA synthetase short-chain family member 3, mitochondrial (686 aa).

Residues Met-1–Gly-29 constitute a mitochondrion transit peptide. Residue Glu-226 to Arg-229 coordinates CoA. ATP-binding positions include Gly-424 to Arg-426 and Asp-445 to Thr-450. At Lys-517 the chain carries N6-succinyllysine. An N6-acetyllysine modification is found at Lys-523. Asp-538, Arg-553, and Arg-564 together coordinate ATP. Arg-623 serves as a coordination point for CoA.

Belongs to the ATP-dependent AMP-binding enzyme family.

Its subcellular location is the mitochondrion matrix. The enzyme catalyses acetate + ATP + CoA = acetyl-CoA + AMP + diphosphate. It carries out the reaction propanoate + ATP + CoA = propanoyl-CoA + AMP + diphosphate. The catalysed reaction is butanoate + ATP + CoA = butanoyl-CoA + AMP + diphosphate. Catalyzes the synthesis of acetyl-CoA from short-chain fatty acids. Propionate is the preferred substrate but can also utilize acetate and butyrate with a much lower affinity. The protein is Acyl-CoA synthetase short-chain family member 3, mitochondrial (ACSS3) of Bos taurus (Bovine).